Reading from the N-terminus, the 339-residue chain is F420-dependent glucose-6-phosphate dehydrogenase (339 aa).

A coenzyme F420-(gamma-Glu)n-binding site is contributed by D41. H42 (proton donor) is an active-site residue. Residues T78 and 109 to 110 contribute to the coenzyme F420-(gamma-Glu)n site; that span reads TG. Residue E111 is the Proton acceptor of the active site. Coenzyme F420-(gamma-Glu)n-binding positions include N114, 177 to 178, and 180 to 181; these read SG and AA. The substrate site is built by T195, K198, K259, and R283.

It belongs to the F420-dependent glucose-6-phosphate dehydrogenase family. As to quaternary structure, homodimer.

The catalysed reaction is oxidized coenzyme F420-(gamma-L-Glu)(n) + D-glucose 6-phosphate + H(+) = 6-phospho-D-glucono-1,5-lactone + reduced coenzyme F420-(gamma-L-Glu)(n). Its function is as follows. Catalyzes the coenzyme F420-dependent oxidation of glucose 6-phosphate (G6P) to 6-phosphogluconolactone. The chain is F420-dependent glucose-6-phosphate dehydrogenase from Nakamurella multipartita (strain ATCC 700099 / DSM 44233 / CIP 104796 / JCM 9543 / NBRC 105858 / Y-104) (Microsphaera multipartita).